Consider the following 1163-residue polypeptide: Restriction of telomere capping protein 1 (1163 aa).

The disordered stretch occupies residues 24-52; the sequence is GTPQSSNSPSANSSISSHKSSKRLSKNQL. Residues 28-41 are compositionally biased toward low complexity; that stretch reads SSNSPSANSSISSH. 5 WD repeats span residues 129–169, 175–214, 221–265, 274–313, and 346–392; these read RNPN…KGTL, DHRR…TKPV, LHND…GSNM, LHAG…SLRT, and GMGS…IPKQ. Disordered stretches follow at residues 525–606 and 833–881; these read AGSS…GSFG and DVHS…DSTT. Composition is skewed to polar residues over residues 539 to 556, 571 to 585, 593 to 606, and 868 to 880; these read LTRS…TKSP, SPPS…STYT, NPSQ…GSFG, and VHSQ…IDST. The segment at 1114–1157 adopts an RING-type; degenerate zinc-finger fold; the sequence is CVFCNEPCKGLVVAISLKCGHRGHFGCLKEWFIDEQNVECPGGC.

This sequence belongs to the WD repeat RTC1 family.

It is found in the vacuole. May be involved in a process influencing telomere capping. In Lodderomyces elongisporus (strain ATCC 11503 / CBS 2605 / JCM 1781 / NBRC 1676 / NRRL YB-4239) (Yeast), this protein is Restriction of telomere capping protein 1 (RTC1).